Here is an 88-residue protein sequence, read N- to C-terminus: Small ribosomal subunit protein uS17 (88 aa).

It belongs to the universal ribosomal protein uS17 family. As to quaternary structure, part of the 30S ribosomal subunit.

Functionally, one of the primary rRNA binding proteins, it binds specifically to the 5'-end of 16S ribosomal RNA. The sequence is that of Small ribosomal subunit protein uS17 from Synechococcus sp. (strain CC9311).